Consider the following 766-residue polypeptide: Isocitrate lyase 2 (766 aa).

106–108 lines the substrate pocket; it reads GGW. A Mg(2+)-binding site is contributed by aspartate 177. Residue cysteine 215 is the Proton acceptor of the active site. Substrate-binding positions include 216–217, arginine 252, 487–491, and threonine 522; these read GH and NLSPS.

The protein belongs to the isocitrate lyase/PEP mutase superfamily. Isocitrate lyase family. The cofactor is Mg(2+).

The catalysed reaction is D-threo-isocitrate = glyoxylate + succinate. It functions in the pathway carbohydrate metabolism; glyoxylate cycle; (S)-malate from isocitrate: step 1/2. Involved in the persistence and virulence of Mycobacterium. Catalyzes the reversible formation of succinate and glyoxylate from isocitrate, a key step of the glyoxylate cycle, which operates as an anaplerotic route for replenishing the tricarboxylic acid cycle during growth on fatty acid substrates. In Mycobacterium bovis (strain ATCC BAA-935 / AF2122/97), this protein is Isocitrate lyase 2 (aceA).